The chain runs to 326 residues: D-allose transport system permease protein AlsC (326 aa).

Residues 1–18 (MGFTTRVKSEASEKKPFN) lie on the Cytoplasmic side of the membrane. Residues 19 to 39 (FALFWDKYGTFFILAIIVAIF) traverse the membrane as a helical segment. The Periplasmic portion of the chain corresponds to 40 to 70 (GSLSPEYFLTTNNITQIFVQSSVTVLIGMGE). Residues 71-91 (FFAILVAGIDLSVGAILALSG) form a helical membrane-spanning segment. Residues 92-101 (MVTAKLMLAG) lie on the Cytoplasmic side of the membrane. A helical transmembrane segment spans residues 102–122 (VDPFLAAMIGGVLVGGALGAI). The Periplasmic segment spans residues 123 to 124 (NG). Residues 125–145 (CLVNWTGLHPFIITLGTNAIF) traverse the membrane as a helical segment. Over 146–149 (RGIT) the chain is Cytoplasmic. A helical transmembrane segment spans residues 150-170 (LVISDANSVYGFSFDFVNFFA). Topologically, residues 171-172 (AS) are periplasmic. A helical membrane pass occupies residues 173–193 (VIGIPVPVIFSLIVALILWFL). The Cytoplasmic segment spans residues 194-221 (TTRMRLGRNIYALGGNKNSAFYSGIDVK). The chain crosses the membrane as a helical span at residues 222–242 (FHILVVFIISGVCAGLAGVVS). Topologically, residues 243–252 (TARLGAAEPL) are periplasmic. Residues 253–273 (AGMGFETYAIASAIIGGTSFF) traverse the membrane as a helical segment. Topologically, residues 274-278 (GGKGR) are cytoplasmic. A run of 2 helical transmembrane segments spans residues 279–299 (IFSV…LNIL) and 300–320 (QVQT…AVAL). Topologically, residues 321–326 (DRLISK) are cytoplasmic.

The protein belongs to the binding-protein-dependent transport system permease family. AraH/RbsC subfamily.

Its subcellular location is the cell inner membrane. In terms of biological role, part of the binding-protein-dependent transport system AlsBAC for D-allose; probably responsible for the translocation of the substrate across the membrane. The sequence is that of D-allose transport system permease protein AlsC (alsC) from Escherichia coli (strain K12).